Consider the following 2427-residue polypeptide: Interferon-induced very large GTPase 1 (2427 aa).

Positions 1485–1726 constitute a VLIG-type G domain; that stretch reads DKRLFVLSVL…KISDFKFRVQ (242 aa). Residues 1495–1502, 1548–1551, and 1625–1628 each bind GTP; these read GLQSSGKS, DTEG, and TAKD.

It belongs to the TRAFAC class dynamin-like GTPase superfamily. Very large inducible GTPase (VLIG) family. As to expression, widely expressed. Expressed at low basal level in lung, heart, thymus and spleen; at still lower level in liver, ovary, kidney and brain. Expressed at very weak level in testis. Undetectable in embryo.

The protein localises to the cytoplasm. Its subcellular location is the cytosol. The protein resides in the nucleus. This Mus musculus (Mouse) protein is Interferon-induced very large GTPase 1 (Gvin1).